Reading from the N-terminus, the 419-residue chain is L-rhamnose isomerase (419 aa).

His262, Asp294, and Asp296 together coordinate Mn(2+).

This sequence belongs to the rhamnose isomerase family. In terms of assembly, homotetramer. It depends on Mn(2+) as a cofactor.

The protein resides in the cytoplasm. The catalysed reaction is L-rhamnopyranose = L-rhamnulose. It functions in the pathway carbohydrate degradation; L-rhamnose degradation; glycerone phosphate from L-rhamnose: step 1/3. Functionally, catalyzes the interconversion of L-rhamnose and L-rhamnulose. The sequence is that of L-rhamnose isomerase from Salmonella choleraesuis (strain SC-B67).